The sequence spans 201 residues: Large ribosomal subunit protein uL4 (201 aa).

The tract at residues 43–71 (TRAQKTRSEVSGGGKKPWAQKGTGRARAG) is disordered.

It belongs to the universal ribosomal protein uL4 family. As to quaternary structure, part of the 50S ribosomal subunit.

Functionally, one of the primary rRNA binding proteins, this protein initially binds near the 5'-end of the 23S rRNA. It is important during the early stages of 50S assembly. It makes multiple contacts with different domains of the 23S rRNA in the assembled 50S subunit and ribosome. Its function is as follows. Forms part of the polypeptide exit tunnel. This is Large ribosomal subunit protein uL4 from Pseudoalteromonas translucida (strain TAC 125).